Reading from the N-terminus, the 185-residue chain is Translation initiation factor IF-3 (185 aa).

This sequence belongs to the IF-3 family. As to quaternary structure, monomer.

Its subcellular location is the cytoplasm. In terms of biological role, IF-3 binds to the 30S ribosomal subunit and shifts the equilibrium between 70S ribosomes and their 50S and 30S subunits in favor of the free subunits, thus enhancing the availability of 30S subunits on which protein synthesis initiation begins. This chain is Translation initiation factor IF-3, found in Rickettsia typhi (strain ATCC VR-144 / Wilmington).